The chain runs to 310 residues: Antiviral protein II/III (310 aa).

The signal sequence occupies residues 1 to 25 (MKMKVLEVVGLAISIWLMLTPPASS). Cystine bridges form between C57-C284 and C106-C123. Y94 is an active-site residue. Residues Y142, E197, and R200 contribute to the active site.

This sequence belongs to the ribosome-inactivating protein family. Type 1 RIP subfamily. PAP-II is expressed in early summer leaves (at protein level). PAP-III is expressed in late summer leaves (at protein level).

It carries out the reaction Endohydrolysis of the N-glycosidic bond at one specific adenosine on the 28S rRNA.. Its function is as follows. Possesses antiviral potency. Inhibits viral infection of plants (tobacco mosaic virus). Inhibits protein synthesis in both prokaryotes and eukaryotes. In Phytolacca americana (American pokeweed), this protein is Antiviral protein II/III (PAP2).